The sequence spans 129 residues: Small ribosomal subunit protein uS11 (129 aa).

This sequence belongs to the universal ribosomal protein uS11 family. Part of the 30S ribosomal subunit. Interacts with proteins S7 and S18. Binds to IF-3.

In terms of biological role, located on the platform of the 30S subunit, it bridges several disparate RNA helices of the 16S rRNA. Forms part of the Shine-Dalgarno cleft in the 70S ribosome. This chain is Small ribosomal subunit protein uS11, found in Escherichia fergusonii (strain ATCC 35469 / DSM 13698 / CCUG 18766 / IAM 14443 / JCM 21226 / LMG 7866 / NBRC 102419 / NCTC 12128 / CDC 0568-73).